The following is a 337-amino-acid chain: Aspartate carbamoyltransferase catalytic subunit (337 aa).

2 residues coordinate carbamoyl phosphate: Arg-57 and Thr-58. Lys-86 contacts L-aspartate. Carbamoyl phosphate-binding residues include Arg-107, His-135, and Gln-138. Residues Arg-172 and Arg-234 each coordinate L-aspartate. The carbamoyl phosphate site is built by Leu-274 and Pro-275.

This sequence belongs to the aspartate/ornithine carbamoyltransferase superfamily. ATCase family. Heterododecamer (2C3:3R2) of six catalytic PyrB chains organized as two trimers (C3), and six regulatory PyrI chains organized as three dimers (R2).

The catalysed reaction is carbamoyl phosphate + L-aspartate = N-carbamoyl-L-aspartate + phosphate + H(+). It participates in pyrimidine metabolism; UMP biosynthesis via de novo pathway; (S)-dihydroorotate from bicarbonate: step 2/3. Catalyzes the condensation of carbamoyl phosphate and aspartate to form carbamoyl aspartate and inorganic phosphate, the committed step in the de novo pyrimidine nucleotide biosynthesis pathway. The polypeptide is Aspartate carbamoyltransferase catalytic subunit (Saccharophagus degradans (strain 2-40 / ATCC 43961 / DSM 17024)).